Reading from the N-terminus, the 379-residue chain is Ribosomal RNA large subunit methyltransferase G (379 aa).

It belongs to the methyltransferase superfamily. RlmG family.

Its subcellular location is the cytoplasm. It catalyses the reaction guanosine(1835) in 23S rRNA + S-adenosyl-L-methionine = N(2)-methylguanosine(1835) in 23S rRNA + S-adenosyl-L-homocysteine + H(+). Functionally, specifically methylates the guanine in position 1835 (m2G1835) of 23S rRNA. This Pectobacterium atrosepticum (strain SCRI 1043 / ATCC BAA-672) (Erwinia carotovora subsp. atroseptica) protein is Ribosomal RNA large subunit methyltransferase G.